Reading from the N-terminus, the 59-residue chain is UPF0434 protein VS_2060 (59 aa).

Belongs to the UPF0434 family.

The protein is UPF0434 protein VS_2060 of Vibrio atlanticus (strain LGP32) (Vibrio splendidus (strain Mel32)).